The chain runs to 156 residues: Arginine repressor (156 aa).

It belongs to the ArgR family.

The protein localises to the cytoplasm. It functions in the pathway amino-acid biosynthesis; L-arginine biosynthesis [regulation]. Regulates arginine biosynthesis genes. The chain is Arginine repressor from Shewanella piezotolerans (strain WP3 / JCM 13877).